The chain runs to 460 residues: Nitrilase and fragile histidine triad fusion protein NitFhit (460 aa).

One can recognise a CN hydrolase domain in the interval 33–279 (ATIAVGQMRS…LDIGTAEVDL (247 aa)). Catalysis depends on residues glutamate 72, lysine 142, and cysteine 183. One can recognise an HIT domain in the interval 315–422 (DRPFATNIVD…MPRRLGDFGH (108 aa)). Residues 407 to 411 (HVHFH) carry the Histidine triad motif motif. Histidine 409 serves as the catalytic Tele-AMP-histidine intermediate.

In the N-terminal section; belongs to the UPF0012 family. In terms of assembly, homotetramer. Mn(2+) serves as cofactor.

The enzyme catalyses P(1),P(3)-bis(5'-adenosyl) triphosphate + H2O = AMP + ADP + 2 H(+). Functionally, cleaves A-5'-PPP-5'A to yield AMP and ADP. The sequence is that of Nitrilase and fragile histidine triad fusion protein NitFhit from Drosophila melanogaster (Fruit fly).